Reading from the N-terminus, the 288-residue chain is Energy-coupling factor transporter ATP-binding protein EcfA2 (288 aa).

An ABC transporter domain is found at 3–245 (IEFKNVDYIY…PDWLKKHFLD (243 aa)). Residue 40–47 (GHTGSGKS) coordinates ATP.

This sequence belongs to the ABC transporter superfamily. Energy-coupling factor EcfA family. As to quaternary structure, forms a stable energy-coupling factor (ECF) transporter complex composed of 2 membrane-embedded substrate-binding proteins (S component), 2 ATP-binding proteins (A component) and 2 transmembrane proteins (T component).

It is found in the cell membrane. In terms of biological role, ATP-binding (A) component of a common energy-coupling factor (ECF) ABC-transporter complex. Unlike classic ABC transporters this ECF transporter provides the energy necessary to transport a number of different substrates. The polypeptide is Energy-coupling factor transporter ATP-binding protein EcfA2 (Lactobacillus gasseri (strain ATCC 33323 / DSM 20243 / BCRC 14619 / CIP 102991 / JCM 1131 / KCTC 3163 / NCIMB 11718 / NCTC 13722 / AM63)).